We begin with the raw amino-acid sequence, 607 residues long: Chaperone protein DnaK (607 aa).

Thr-174 carries the post-translational modification Phosphothreonine; by autocatalysis. The interval 571–607 (AAMYQKQAQQQQPGPGPDAGKDKDDKDKTVDADYEVK) is disordered. Basic and acidic residues predominate over residues 589–607 (AGKDKDDKDKTVDADYEVK).

Belongs to the heat shock protein 70 family.

Acts as a chaperone. The sequence is that of Chaperone protein DnaK from Desulforudis audaxviator (strain MP104C).